The primary structure comprises 130 residues: Sulfurtransferase TusD (130 aa).

Catalysis depends on Cys-80, which acts as the Cysteine persulfide intermediate.

The protein belongs to the DsrE/TusD family. In terms of assembly, heterohexamer, formed by a dimer of trimers. The hexameric TusBCD complex contains 2 copies each of TusB, TusC and TusD. The TusBCD complex interacts with TusE.

The protein resides in the cytoplasm. Functionally, part of a sulfur-relay system required for 2-thiolation of 5-methylaminomethyl-2-thiouridine (mnm(5)s(2)U) at tRNA wobble positions. Accepts sulfur from TusA and transfers it in turn to TusE. The polypeptide is Sulfurtransferase TusD (Proteus mirabilis (strain HI4320)).